We begin with the raw amino-acid sequence, 610 residues long: Transducer of Cdc42-dependent actin assembly protein 2 homolog (610 aa).

Residues M1–D267 enclose the F-BAR domain. Residues A283 to S315 form a disordered region. A compositionally biased stretch (basic and acidic residues) spans G291–D302. The 78-residue stretch at S352 to M429 folds into the REM-1 domain. The stretch at A355–R385 forms a coiled coil. 2 disordered regions span residues E436–N487 and L499–E519. The segment covering G437–D449 has biased composition (basic and acidic residues). Over residues S453–S464 the composition is skewed to low complexity. The span at A475–N487 shows a compositional bias: polar residues. Positions S501–P513 are enriched in low complexity. Residues E547 to Q610 enclose the SH3 domain.

It belongs to the FNBP1 family. In terms of assembly, interacts (via SH3 domain) with wsp-1 and abi-1. Interacts with cdc-42 and (via SH3 domain) with wve-1.

Its subcellular location is the cell junction. It localises to the cell membrane. The protein localises to the cytoplasmic vesicle. The protein resides in the cytoplasm. It is found in the recycling endosome. Its function is as follows. Plays a role in protein trafficking, actin organization and embryonic morphogenesis. Potentially acts as a cdc-42 effector. May play a role in egg laying. Together with toca-1, is required for protein trafficking regulating yolk protein clathrin-mediated endocytosis by oocytes during oogenesis and retrograde recycling and the sorting of recycling endosome cargo proteins such as mig-14. Also, together with toca-2, controls the distribution of actin at cell junctions. The polypeptide is Transducer of Cdc42-dependent actin assembly protein 2 homolog (Caenorhabditis elegans).